The primary structure comprises 74 residues: Putative membrane protein insertion efficiency factor (74 aa).

It belongs to the UPF0161 family.

The protein resides in the cell membrane. Functionally, could be involved in insertion of integral membrane proteins into the membrane. In Bacillus pumilus (strain SAFR-032), this protein is Putative membrane protein insertion efficiency factor.